We begin with the raw amino-acid sequence, 39 residues long: Non-specific lipid-transfer protein (39 aa).

It belongs to the plant LTP family.

In terms of biological role, plant non-specific lipid-transfer proteins transfer phospholipids as well as galactolipids across membranes. May play a role in wax or cutin deposition in the cell walls of expanding epidermal cells and certain secretory tissues. This chain is Non-specific lipid-transfer protein, found in Musa acuminata (Banana).